A 543-amino-acid polypeptide reads, in one-letter code: Ipecac alkaloid beta-glucosidase 3 (543 aa).

A beta-D-glucoside contacts are provided by residues glutamine 36, histidine 140, 185–186 (NE), tyrosine 350, glutamate 422, tryptophan 471, and phenylalanine 487. The active-site Proton donor is glutamate 186. The active-site Nucleophile is glutamate 422.

The protein belongs to the glycosyl hydrolase 1 family.

The protein resides in the cytoplasm. The protein localises to the cytosol. It catalyses the reaction deacetylipecoside + H2O = deacetylipecoside aglycone + D-glucose. The enzyme catalyses deacetylisoipecoside + H2O = deacetylisoipecoside aglycone + D-glucose. Its pathway is alkaloid biosynthesis. Beta-glucosidase catalyzing deglucosylation on N-deacetylisoipecoside and N-deacetylipecoside. This chain is Ipecac alkaloid beta-glucosidase 3, found in Carapichea ipecacuanha (Ipecac).